A 365-amino-acid chain; its full sequence is Holliday junction branch migration complex subunit RuvB (365 aa).

Over residues 1–10 (MAIVSSNAAS) the composition is skewed to polar residues. Positions 1-48 (MAIVSSNAASQRPRPDRGPDRVPNRVVDGARQAEDDRDPGRVGAKEDS) are disordered. Composition is skewed to basic and acidic residues over residues 13-23 (PRPDRGPDRVP) and 31-48 (RQAEDDRDPGRVGAKEDS). The segment at 13-210 (PRPDRGPDRV…FGLIQRLEFY (198 aa)) is large ATPase domain (RuvB-L). ATP is bound by residues L49, R50, G91, K94, T95, T96, R200, Y210, and R247. T95 is a binding site for Mg(2+). Positions 211–282 (GLEDLQAIVE…LVDEALTLHR (72 aa)) are small ATPAse domain (RuvB-S). Residues 285 to 365 (GRGLDASDRR…GWPYPQEQAA (81 aa)) form a head domain (RuvB-H) region. Positions 340 and 345 each coordinate DNA.

The protein belongs to the RuvB family. Homohexamer. Forms an RuvA(8)-RuvB(12)-Holliday junction (HJ) complex. HJ DNA is sandwiched between 2 RuvA tetramers; dsDNA enters through RuvA and exits via RuvB. An RuvB hexamer assembles on each DNA strand where it exits the tetramer. Each RuvB hexamer is contacted by two RuvA subunits (via domain III) on 2 adjacent RuvB subunits; this complex drives branch migration. In the full resolvosome a probable DNA-RuvA(4)-RuvB(12)-RuvC(2) complex forms which resolves the HJ.

The protein localises to the cytoplasm. The enzyme catalyses ATP + H2O = ADP + phosphate + H(+). In terms of biological role, the RuvA-RuvB-RuvC complex processes Holliday junction (HJ) DNA during genetic recombination and DNA repair, while the RuvA-RuvB complex plays an important role in the rescue of blocked DNA replication forks via replication fork reversal (RFR). RuvA specifically binds to HJ cruciform DNA, conferring on it an open structure. The RuvB hexamer acts as an ATP-dependent pump, pulling dsDNA into and through the RuvAB complex. RuvB forms 2 homohexamers on either side of HJ DNA bound by 1 or 2 RuvA tetramers; 4 subunits per hexamer contact DNA at a time. Coordinated motions by a converter formed by DNA-disengaged RuvB subunits stimulates ATP hydrolysis and nucleotide exchange. Immobilization of the converter enables RuvB to convert the ATP-contained energy into a lever motion, pulling 2 nucleotides of DNA out of the RuvA tetramer per ATP hydrolyzed, thus driving DNA branch migration. The RuvB motors rotate together with the DNA substrate, which together with the progressing nucleotide cycle form the mechanistic basis for DNA recombination by continuous HJ branch migration. Branch migration allows RuvC to scan DNA until it finds its consensus sequence, where it cleaves and resolves cruciform DNA. The chain is Holliday junction branch migration complex subunit RuvB from Synechococcus sp. (strain WH7803).